A 168-amino-acid chain; its full sequence is Small ribosomal subunit protein uS5 (168 aa).

In terms of domain architecture, S5 DRBM spans 13-76 (LAEKLIAVNR…EKARRNMINV (64 aa)).

This sequence belongs to the universal ribosomal protein uS5 family. As to quaternary structure, part of the 30S ribosomal subunit. Contacts proteins S4 and S8.

Its function is as follows. With S4 and S12 plays an important role in translational accuracy. Functionally, located at the back of the 30S subunit body where it stabilizes the conformation of the head with respect to the body. The sequence is that of Small ribosomal subunit protein uS5 from Pseudoalteromonas translucida (strain TAC 125).